The primary structure comprises 112 residues: Cytochrome c3 (112 aa).

Heme c contacts are provided by H26, H29, C34, C37, H38, H39, C49, C54, H55, H73, C83, C86, H87, C104, C109, and H110.

It depends on heme as a cofactor.

Its function is as follows. Participates in sulfate respiration coupled with phosphorylation by transferring electrons from the enzyme dehydrogenase to ferredoxin. This is Cytochrome c3 from Megalodesulfovibrio gigas (strain ATCC 19364 / DSM 1382 / NCIMB 9332 / VKM B-1759) (Desulfovibrio gigas).